Reading from the N-terminus, the 71-residue chain is Large ribosomal subunit protein uL29 (71 aa).

This sequence belongs to the universal ribosomal protein uL29 family.

This Methanococcus maripaludis (strain C7 / ATCC BAA-1331) protein is Large ribosomal subunit protein uL29.